We begin with the raw amino-acid sequence, 117 residues long: MSSSTPFDPYALSEHDEERPQNVQSKSRTAELQAEIDDTVGIMRDNINKVAERGERLTSIEDKADNLAVSAQGFKRGANRVRKAMWYKDLKMKMCLALVIIILLVVIIVPIAVHFSR.

The interval 1 to 30 (MSSSTPFDPYALSEHDEERPQNVQSKSRTA) is disordered. The Cytoplasmic portion of the chain corresponds to 1–94 (MSSSTPFDPY…MWYKDLKMKM (94 aa)). The 61-residue stretch at 28-88 (RTAELQAEID…NRVRKAMWYK (61 aa)) folds into the v-SNARE coiled-coil homology domain. Lys-63 is covalently cross-linked (Glycyl lysine isopeptide (Lys-Gly) (interchain with G-Cter in ubiquitin)). Cys-95 carries the S-palmitoyl cysteine lipid modification. A helical; Anchor for type IV membrane protein transmembrane segment spans residues 95 to 111 (CLALVIIILLVVIIVPI). The Vesicular segment spans residues 112–117 (AVHFSR).

Belongs to the synaptobrevin family. In terms of processing, palmitoylated by SWF1.

The protein resides in the endomembrane system. In terms of biological role, SNC1 and SNC2 are vesicle-targeting proteins essential for normal secretory traffic between the Golgi and the plasma membrane. They may also be involved in vesicle fusion. The polypeptide is Synaptobrevin homolog 1 (SNC1) (Saccharomyces cerevisiae (strain ATCC 204508 / S288c) (Baker's yeast)).